The following is a 407-amino-acid chain: Argininosuccinate synthase (407 aa).

ATP contacts are provided by residues 16–24 and Ala44; that span reads AYSGGLDTS. L-citrulline is bound by residues Tyr96 and Ser101. Gly126 is a binding site for ATP. L-aspartate contacts are provided by Thr128, Asn132, and Asp133. L-citrulline is bound at residue Asn132. Arg136, Ser185, Ser194, Glu270, and Tyr282 together coordinate L-citrulline.

The protein belongs to the argininosuccinate synthase family. Type 1 subfamily. Homotetramer.

The protein localises to the cytoplasm. The catalysed reaction is L-citrulline + L-aspartate + ATP = 2-(N(omega)-L-arginino)succinate + AMP + diphosphate + H(+). It participates in amino-acid biosynthesis; L-arginine biosynthesis; L-arginine from L-ornithine and carbamoyl phosphate: step 2/3. The protein is Argininosuccinate synthase of Shewanella amazonensis (strain ATCC BAA-1098 / SB2B).